The sequence spans 470 residues: MPMRSKTPTPLRFSNGKHQRDDSEYSWTDVGTGEKARNVSVLGAIRRAAKKVFVIIFLGQRKLKPTECRSDPGESSTHDRESTLSGWTGYSSPSSFGRSTERKVSGQYRFSGSRFQSPGKDSSSSKSWHQGPVIFSFGELQRATANFSSVHQIGEGGFGTVFKGKLDDGTIVAIKRARKNNYGKSWLLEFKNEIYTLSKIEHMNLVKLYGFLEHGDEKVIVVEYVANGNLREHLDGLRGNRLEMAERLEIAIDVAHALTYLHTYTDSPIIHRDIKASNILITNKLRAKVADFGFARLVSEDLGATHISTQVKGSAGYVDPDYLRTFQLTDKSDVYSFGVLLVEILTGRRPIELKRPRKDRLTVKWALRRLKDDEAVLIMDPFLKRNRAAIEVAEKMLRLASECVTPTRATRPAMKGIAEKLWAIRREMKETMICSSASNSSCSSTTHSFIGRDSDRYALPRIEDNENSIE.

Disordered stretches follow at residues 1–29 and 65–128; these read MPMRSKTPTPLRFSNGKHQRDDSEYSWTD and PTEC…SKSW. The segment covering 65–82 has biased composition (basic and acidic residues); it reads PTECRSDPGESSTHDRES. 2 stretches are compositionally biased toward polar residues: residues 83 to 98 and 108 to 121; these read TLSGWTGYSSPSSFGR and YRFSGSRFQSPGKD. The 277-residue stretch at 147–423 folds into the Protein kinase domain; sequence FSSVHQIGEG…MKGIAEKLWA (277 aa). ATP contacts are provided by residues 153-161 and K175; that span reads IGEGGFGTV. Residues 162–185 form a caM-binding region; it reads FKGKLDDGTIVAIKRARKNNYGKS. The active-site Proton acceptor is D273. A phosphoserine mark is found at S277 and S308. T309 carries the phosphothreonine modification. Y322 is modified (phosphotyrosine).

Belongs to the protein kinase superfamily. Ser/Thr protein kinase family. Interacts with calmodulin (CaM) in a Ca(2+)-dependent manner. Mg(2+) serves as cofactor. Post-translationally, autophosphorylated.

Its subcellular location is the cytoplasm. It catalyses the reaction L-seryl-[protein] + ATP = O-phospho-L-seryl-[protein] + ADP + H(+). The enzyme catalyses L-threonyl-[protein] + ATP = O-phospho-L-threonyl-[protein] + ADP + H(+). Its activity is regulated as follows. Up-regulated by Ca(2+)/CaM. The protein is Calmodulin-binding receptor-like cytoplasmic kinase 1 (CRCK1) of Arabidopsis thaliana (Mouse-ear cress).